Consider the following 520-residue polypeptide: Putative hydrolase Mb2247c (520 aa).

The N-terminal stretch at 1–34 (MAAMWRRRPLSSALLSFGLLLGGLPLAAPPLAGA) is a signal peptide. The chain crosses the membrane as a helical span at residues 104–124 (FGALLVNPGGPGASAVDMVAA). One can recognise an AB hydrolase-1 domain in the interval 105-403 (GALLVNPGGP…APTPADPAAW (299 aa)). Ser232 serves as the catalytic Nucleophile. The active site involves Asp461. His488 acts as the Proton donor in catalysis.

This sequence belongs to the peptidase S33 family.

The protein resides in the cell membrane. This is Putative hydrolase Mb2247c from Mycobacterium bovis (strain ATCC BAA-935 / AF2122/97).